The sequence spans 62 residues: UPF0337 protein gsr0040 (62 aa).

2 stretches are compositionally biased toward basic and acidic residues: residues 1-15 and 27-62; these read MGID…KDVQ and DDPK…IDNV. A disordered region spans residues 1 to 62; the sequence is MGIDKRAEAT…DQAHRTIDNV (62 aa).

It belongs to the UPF0337 (CsbD) family.

This chain is UPF0337 protein gsr0040, found in Gloeobacter violaceus (strain ATCC 29082 / PCC 7421).